We begin with the raw amino-acid sequence, 115 residues long: MKFVLLFGVLLVTLFSYSSAEMLDDFDQADEEELLSLIEKEEARAKECTPRFYDCSHDRHSCCRSELFKDVCTCFYPEGGDNEVCTCQQPKHLKYMEKAADKAKKFGGKIKKWFG.

An N-terminal signal peptide occupies residues 1 to 20 (MKFVLLFGVLLVTLFSYSSA). Residues 21–44 (EMLDDFDQADEEELLSLIEKEEAR) constitute a propeptide that is removed on maturation. Disulfide bonds link C48-C63, C55-C72, C62-C87, and C74-C85.

The protein belongs to the neurotoxin 19 (CSTX) family. 01 subfamily. Expressed by the venom gland.

Its subcellular location is the secreted. In Lycosa singoriensis (Wolf spider), this protein is U3-lycotoxin-Ls1a.